Consider the following 284-residue polypeptide: 2-dehydro-3-deoxyphosphooctonate aldolase (284 aa).

Belongs to the KdsA family.

The protein resides in the cytoplasm. It carries out the reaction D-arabinose 5-phosphate + phosphoenolpyruvate + H2O = 3-deoxy-alpha-D-manno-2-octulosonate-8-phosphate + phosphate. It participates in carbohydrate biosynthesis; 3-deoxy-D-manno-octulosonate biosynthesis; 3-deoxy-D-manno-octulosonate from D-ribulose 5-phosphate: step 2/3. Its pathway is bacterial outer membrane biogenesis; lipopolysaccharide biosynthesis. The polypeptide is 2-dehydro-3-deoxyphosphooctonate aldolase (Burkholderia orbicola (strain MC0-3)).